A 409-amino-acid polypeptide reads, in one-letter code: Argininosuccinate synthase (409 aa).

ATP is bound by residues 8–16 and alanine 34; that span reads AYSGGLDTS. Tyrosine 85 serves as a coordination point for L-citrulline. Residue glycine 115 participates in ATP binding. The L-aspartate site is built by threonine 117, asparagine 121, and aspartate 122. Asparagine 121 is a binding site for L-citrulline. Residues arginine 125, serine 178, serine 187, glutamate 268, and tyrosine 280 each coordinate L-citrulline.

Belongs to the argininosuccinate synthase family. Type 1 subfamily. In terms of assembly, homotetramer.

Its subcellular location is the cytoplasm. It carries out the reaction L-citrulline + L-aspartate + ATP = 2-(N(omega)-L-arginino)succinate + AMP + diphosphate + H(+). The protein operates within amino-acid biosynthesis; L-arginine biosynthesis; L-arginine from L-ornithine and carbamoyl phosphate: step 2/3. The sequence is that of Argininosuccinate synthase from Thermotoga sp. (strain RQ2).